We begin with the raw amino-acid sequence, 394 residues long: MARIETRTEPMVLNMGPHHPSMHGVLRLIVTLDGEDVVDCEPVIGYLHRGMEKIAENRTTVMYVPYVSRWDYAAGMFNEAVTVNAPEKLAGVAVPKRASYIRVIMLELNRIANHLLWFGPFLADVGAQTPFFYQFREREMIYDLWEAATGYRMVNNNYFRVGGVAADLPYGWVDKCLEFCDYFLPVVDEYEKLVTNNPIFRRRIEGIGTISREEAINWGLSGPMLRASGVKWDLRKVDHYESYDDFDWDVQWETAGDCLARYTVRMREMRESVKIIKQAIKGLPGGPYENLEAKRLIAGKKSEWDAFDYQYIGKKVSPTFKMPKGEIYARVESGKGELGIYLIGDDNVFPWRWKIRPADFNNLQILPHLLRGMKVADIVVILGSIDVIMGSVDR.

This sequence belongs to the complex I 49 kDa subunit family. As to quaternary structure, NDH-1 can be composed of about 15 different subunits; different subcomplexes with different compositions have been identified which probably have different functions.

Its subcellular location is the cellular thylakoid membrane. The catalysed reaction is a plastoquinone + NADH + (n+1) H(+)(in) = a plastoquinol + NAD(+) + n H(+)(out). It catalyses the reaction a plastoquinone + NADPH + (n+1) H(+)(in) = a plastoquinol + NADP(+) + n H(+)(out). In terms of biological role, NDH-1 shuttles electrons from an unknown electron donor, via FMN and iron-sulfur (Fe-S) centers, to quinones in the respiratory and/or the photosynthetic chain. The immediate electron acceptor for the enzyme in this species is believed to be plastoquinone. Couples the redox reaction to proton translocation, and thus conserves the redox energy in a proton gradient. Cyanobacterial NDH-1 also plays a role in inorganic carbon-concentration. The protein is NAD(P)H-quinone oxidoreductase subunit H of Trichormus variabilis (strain ATCC 29413 / PCC 7937) (Anabaena variabilis).